The chain runs to 261 residues: Phosphatidylglycerol--prolipoprotein diacylglyceryl transferase (261 aa).

A run of 4 helical transmembrane segments spans residues 17 to 37 (FAIH…LLLG), 59 to 79 (LLFA…TLFY), 94 to 114 (IWEG…ALLW), and 121 to 141 (TSFF…LAFG). A 1,2-diacyl-sn-glycero-3-phospho-(1'-sn-glycerol) is bound at residue Arg142. 2 helical membrane-spanning segments follow: residues 174-194 (PSQI…LWIY) and 228-248 (FLGL…PMII).

It belongs to the Lgt family.

Its subcellular location is the cell inner membrane. The catalysed reaction is L-cysteinyl-[prolipoprotein] + a 1,2-diacyl-sn-glycero-3-phospho-(1'-sn-glycerol) = an S-1,2-diacyl-sn-glyceryl-L-cysteinyl-[prolipoprotein] + sn-glycerol 1-phosphate + H(+). The protein operates within protein modification; lipoprotein biosynthesis (diacylglyceryl transfer). Catalyzes the transfer of the diacylglyceryl group from phosphatidylglycerol to the sulfhydryl group of the N-terminal cysteine of a prolipoprotein, the first step in the formation of mature lipoproteins. This is Phosphatidylglycerol--prolipoprotein diacylglyceryl transferase from Polynucleobacter asymbioticus (strain DSM 18221 / CIP 109841 / QLW-P1DMWA-1) (Polynucleobacter necessarius subsp. asymbioticus).